The primary structure comprises 282 residues: Glutamate--LysW ligase ArgX (282 aa).

Residues Lys-87, Lys-127, Gly-131–Val-137, and Gln-167–Arg-178 each bind ATP. Positions Tyr-91–Lys-277 constitute an ATP-grasp domain. Arg-192 provides a ligand contact to substrate. ATP is bound at residue Asn-202. A substrate-binding site is contributed by Ile-203–Ala-204. Residues Asp-237, Glu-250, and Asn-252 each contribute to the Mg(2+) site. Glu-256–Phe-260 is a substrate binding site. A GF motif that is essential for ArgX substrate specificity motif is present at residues Gly-259–Phe-260.

This sequence belongs to the RimK family. LysX subfamily. Homotetramer. Interacts with LysW. The cofactor is Mg(2+).

The catalysed reaction is [amino-group carrier protein]-C-terminal-L-glutamate + L-glutamate + ATP = [amino-group carrier protein]-C-terminal-gamma-(L-glutamyl)-L-glutamate + ADP + phosphate + H(+). Its pathway is amino-acid biosynthesis; L-arginine biosynthesis. Catalyzes the ATP-dependent formation of a covalent bond between the amino group of glutamate and the gamma-carboxyl group of the C-terminal glutamate residue in LysW. In Sulfolobus acidocaldarius (strain ATCC 33909 / DSM 639 / JCM 8929 / NBRC 15157 / NCIMB 11770), this protein is Glutamate--LysW ligase ArgX.